Reading from the N-terminus, the 389-residue chain is Protein WALLS ARE THIN 1 (389 aa).

The next 10 helical transmembrane spans lie at 18–38 (LQLH…HVVS), 49–69 (LVFP…FAYF), 76–96 (PAIT…GITA), 111–131 (TFAS…AALL), 143–163 (GISK…ITLY), 198–218 (WTLG…WLVF), 230–250 (LSVT…IAAF), 266–286 (LFTI…VQIW), 294–314 (VFVA…ASIA), and 319–339 (FYLG…FVLY). EamA domains lie at 32-161 (AGFH…SVIT) and 210-339 (LSWS…FVLY). S372 is subject to Phosphoserine.

This sequence belongs to the drug/metabolite transporter (DMT) superfamily. Plant drug/metabolite exporter (P-DME) (TC 2.A.7.4) family. As to expression, mostly expressed in stems and hypocotyls, also present in seedlings, root, leaves, flowers and siliques. Ubiquitous, mostly expressed in vascular tissues and secondary wall-forming cells, including developing xylem vessels and fibers.

Its subcellular location is the vacuole membrane. Its function is as follows. Required for secondary wall formation in fibers, especially in short days conditions. Promotes indole metabolism and transport (e.g. tryptophan, neoglucobrassicin and auxin (indole-3-acetic acid)). May prevent salicylic-acid (SA) accumulation. The sequence is that of Protein WALLS ARE THIN 1 (WAT1) from Arabidopsis thaliana (Mouse-ear cress).